A 171-amino-acid polypeptide reads, in one-letter code: S-ribosylhomocysteine lyase (171 aa).

Positions 54, 58, and 128 each coordinate Fe cation.

The protein belongs to the LuxS family. As to quaternary structure, homodimer. The cofactor is Fe cation.

The catalysed reaction is S-(5-deoxy-D-ribos-5-yl)-L-homocysteine = (S)-4,5-dihydroxypentane-2,3-dione + L-homocysteine. Its function is as follows. Involved in the synthesis of autoinducer 2 (AI-2) which is secreted by bacteria and is used to communicate both the cell density and the metabolic potential of the environment. The regulation of gene expression in response to changes in cell density is called quorum sensing. Catalyzes the transformation of S-ribosylhomocysteine (RHC) to homocysteine (HC) and 4,5-dihydroxy-2,3-pentadione (DPD). The polypeptide is S-ribosylhomocysteine lyase (Edwardsiella ictaluri (strain 93-146)).